The chain runs to 828 residues: Mediator of RNA polymerase II transcription subunit 16 (828 aa).

5 WD repeats span residues 68-107, 199-241, 264-308, 622-663, and 777-816; these read GHQEVITSLEWDQSGSRLLSADADGRIKCWGMTDHLANSW, RCRV…VSEK, DKFP…LPLN, NQGS…CLPV, and FPTEPCKSCTRCGCVTMLKSPNKATAVKQWEQRWIKTCLC.

It belongs to the Mediator complex subunit 16 family. In terms of assembly, component of the Mediator complex.

Its subcellular location is the nucleus. Functionally, component of the Mediator complex, a coactivator involved in the regulated transcription of nearly all RNA polymerase II-dependent genes. Mediator functions as a bridge to convey information from gene-specific regulatory proteins to the basal RNA polymerase II transcription machinery. Mediator is recruited to promoters by direct interactions with regulatory proteins and serves as a scaffold for the assembly of a functional preinitiation complex with RNA polymerase II and the general transcription factors. This is Mediator of RNA polymerase II transcription subunit 16 (med16) from Xenopus tropicalis (Western clawed frog).